The following is a 1235-amino-acid chain: ATP-dependent helicase/nuclease subunit A (1235 aa).

The 471-residue stretch at 12–482 (SLWTDDQWKA…IDLSQNFRSR (471 aa)) folds into the UvrD-like helicase ATP-binding domain. An ATP-binding site is contributed by 33–40 (AAAGSGKT). In terms of domain architecture, UvrD-like helicase C-terminal spans 509 to 800 (AAELTLGASF…RMMTIHASKG (292 aa)).

Belongs to the helicase family. AddA subfamily. As to quaternary structure, heterodimer of AddA and AddB/RexB. It depends on Mg(2+) as a cofactor.

It catalyses the reaction Couples ATP hydrolysis with the unwinding of duplex DNA by translocating in the 3'-5' direction.. The catalysed reaction is ATP + H2O = ADP + phosphate + H(+). Functionally, the heterodimer acts as both an ATP-dependent DNA helicase and an ATP-dependent, dual-direction single-stranded exonuclease. Recognizes the chi site generating a DNA molecule suitable for the initiation of homologous recombination. The AddA nuclease domain is required for chi fragment generation; this subunit has the helicase and 3' -&gt; 5' nuclease activities. In Listeria monocytogenes serotype 4b (strain F2365), this protein is ATP-dependent helicase/nuclease subunit A.